The sequence spans 495 residues: MSSKVIVTIFGASGDLAKRKLYPSLFRLYQSGNLSKHFAVIGTARRPWSKEYFESVVVESILDLADSTEQAQEFASHFYYQSHDVNDSEHYIALRQLQAELNEKYQAEHNKLFFLSMAPQFFGTIAKHLKSENIVDGKGFERLIVEKPFGTDYATASKLNDELLATFDEEQIFRIDHYLGKEMIQSIFAVRFANLIFENVWNKDFIDNVQITFAERLGVEERGGYYDQSGALRDMVQNHTLQLLSLLAMDKPASFTKDEIRAEKIKVFKNLYHPTDEELKEHFIRGQYRSGKIDGMKYISYRSEPNVNPESTTETFTSGAFFVDSDRFRGVPFFFRTGKRLTEKGTHVNIVFKQMDSIFGEPLAPNILTIYIQPTEGFSLSLNGKQVGEEFNLAPNSLDYRTDATATGASPEPYEKLIYDVLNNNSTNFSHWDEVCASWKLIDRIEKLWAENGAPLHDYKAGSMGPQASFDLLEKFGAKWTWQPDITYRQDGRLE.

Residues 11–18, Arg-45, 84–85, and Lys-147 each bind NADP(+); these read GASGDLAK and DV. Substrate is bound by residues His-177, Lys-181, Glu-215, and Asp-234. His-239 serves as the catalytic Proton acceptor. The substrate site is built by Lys-339 and Lys-344.

This sequence belongs to the glucose-6-phosphate dehydrogenase family.

The catalysed reaction is D-glucose 6-phosphate + NADP(+) = 6-phospho-D-glucono-1,5-lactone + NADPH + H(+). It participates in carbohydrate degradation; pentose phosphate pathway; D-ribulose 5-phosphate from D-glucose 6-phosphate (oxidative stage): step 1/3. Catalyzes the oxidation of glucose 6-phosphate to 6-phosphogluconolactone. The protein is Glucose-6-phosphate 1-dehydrogenase of Streptococcus pneumoniae serotype 4 (strain ATCC BAA-334 / TIGR4).